The primary structure comprises 121 residues: Large ribosomal subunit protein bL19 (121 aa).

This sequence belongs to the bacterial ribosomal protein bL19 family.

Functionally, this protein is located at the 30S-50S ribosomal subunit interface and may play a role in the structure and function of the aminoacyl-tRNA binding site. This Borreliella burgdorferi (strain ATCC 35210 / DSM 4680 / CIP 102532 / B31) (Borrelia burgdorferi) protein is Large ribosomal subunit protein bL19 (rplS).